The following is a 265-amino-acid chain: ATP synthase subunit a (265 aa).

Transmembrane regions (helical) follow at residues 25–45 (FWAVNVDTIFWSVLLGVLFLW), 88–108 (IAPLALTIFVWIFLMNLMDLI), 142–162 (DLNTTFALSLSVFALIIIYSI), 207–227 (LFGNMYAGELIFILIAMIGFW), and 233–253 (FAWAVFHILVITLQAFIFMML).

This sequence belongs to the ATPase A chain family. In terms of assembly, F-type ATPases have 2 components, CF(1) - the catalytic core - and CF(0) - the membrane proton channel. CF(1) has five subunits: alpha(3), beta(3), gamma(1), delta(1), epsilon(1). CF(0) has three main subunits: a(1), b(2) and c(9-12). The alpha and beta chains form an alternating ring which encloses part of the gamma chain. CF(1) is attached to CF(0) by a central stalk formed by the gamma and epsilon chains, while a peripheral stalk is formed by the delta and b chains.

The protein resides in the cell inner membrane. Its function is as follows. Key component of the proton channel; it plays a direct role in the translocation of protons across the membrane. This chain is ATP synthase subunit a, found in Idiomarina loihiensis (strain ATCC BAA-735 / DSM 15497 / L2-TR).